The following is a 494-amino-acid chain: Sphingosine-1-phosphate transporter MFSD2B (494 aa).

Over residues 1–12 (MSVPHGPTPAPV) the composition is skewed to pro residues. The tract at residues 1-26 (MSVPHGPTPAPVAEPHTQEPGSDKRD) is disordered. The next 10 helical transmembrane spans lie at 103 to 123 (LMPW…FLWF), 140 to 160 (CLFQ…TMIL), 179 to 199 (MAGT…AHGS), 223 to 243 (IAAA…CLGV), 277 to 297 (VVSF…LVLF), 310 to 330 (NLVL…EWVL), 339 to 359 (AFGI…PSAP), 360 to 380 (VAYV…LLPW), 402 to 422 (TIFY…ALGI), and 449 to 469 (VLIG…LLVG). A disordered region spans residues 473-494 (KMPRQDTSSQLSLRRRTSYSLA). A compositionally biased stretch (basic residues) spans 485–494 (LRRRTSYSLA).

This sequence belongs to the major facilitator superfamily. In terms of tissue distribution, widely expressed with highest expression in spleen, lung and testis. Predominantly expressed in erythroid lineages giving rise to erythrocytes and platelets, but absent in lymphoid lineages.

The protein localises to the cell membrane. The enzyme catalyses sphing-4-enine 1-phosphate(in) = sphing-4-enine 1-phosphate(out). It carries out the reaction sphinganine 1-phosphate(in) = sphinganine 1-phosphate(out). It catalyses the reaction sphinga-4E,14Z-dienine-1-phosphate(in) = sphinga-4E,14Z-dienine-1-phosphate(out). Its function is as follows. Lipid transporter that specifically mediates export of sphingosine-1-phosphate in red blood cells and platelets. Sphingosine-1-phosphate is a signaling sphingolipid and its export from red blood cells into in the plasma is required for red blood cell morphology. Sphingosine-1-phosphate export from platelets is required for platelet aggregation and thrombus formation. Mediates the export of different sphingosine-1-phosphate (S1P) species, including S1P(d18:0) (sphinganine 1-phosphate), S1P (d18:1) (sphing-4-enine 1-phosphate) and S1P (d18:2) (sphinga-4E,14Z-dienine-1-phosphate). Release of sphingosine-1-phosphate is facilitated by a proton gradient. In contrast, cations, such as sodium, are not required to drive sphingosine-1-phosphate transport. In addition to export, also able to mediate S1P import. Does not transport lysophosphatidylcholine (LPC). In Mus musculus (Mouse), this protein is Sphingosine-1-phosphate transporter MFSD2B.